Here is a 255-residue protein sequence, read N- to C-terminus: 5'-nucleotidase SurE (255 aa).

A divalent metal cation is bound by residues aspartate 8, aspartate 9, serine 40, and asparagine 93.

It belongs to the SurE nucleotidase family. Requires a divalent metal cation as cofactor.

It is found in the cytoplasm. It carries out the reaction a ribonucleoside 5'-phosphate + H2O = a ribonucleoside + phosphate. Its function is as follows. Nucleotidase that shows phosphatase activity on nucleoside 5'-monophosphates. This chain is 5'-nucleotidase SurE, found in Bradyrhizobium diazoefficiens (strain JCM 10833 / BCRC 13528 / IAM 13628 / NBRC 14792 / USDA 110).